The following is a 516-amino-acid chain: Pickpocket protein 11 (516 aa).

The next 2 helical transmembrane spans lie at isoleucine 117 to serine 137 and phenylalanine 454 to phenylalanine 474.

This sequence belongs to the amiloride-sensitive sodium channel (TC 1.A.6) family. In terms of tissue distribution, expressed in embryonic and larval tracheal systems in the dorsal trunk and transverse connective (TC), but not in the junction between the dorsal trunk and TC, and in several tracheal branches and terminal cells. In larvae, also expressed in ventral pits. Expressed in the taste-sensing terminal organ of the larval head. In adult, expressed in hairs on the tibia, femur, tarsi of the leg and wing margin.

The protein resides in the membrane. Functionally, part of a complex that plays a role in tracheal liquid clearance. In both larvae and adults, contributes to the behavioral response to salt. Probable role in sodium transport. The protein is Pickpocket protein 11 (ppk11) of Drosophila melanogaster (Fruit fly).